The chain runs to 337 residues: Serpentine receptor class alpha-17 (337 aa).

6 helical membrane passes run leucine 28 to isoleucine 48, glutamate 110 to phenylalanine 130, isoleucine 155 to valine 175, phenylalanine 197 to valine 217, cysteine 247 to isoleucine 267, and isoleucine 282 to phenylalanine 302.

This sequence belongs to the nematode receptor-like protein sra family.

The protein localises to the membrane. In Caenorhabditis elegans, this protein is Serpentine receptor class alpha-17 (sra-17).